The sequence spans 1368 residues: DNA-directed RNA polymerase subunit beta (1368 aa).

The protein belongs to the RNA polymerase beta chain family. As to quaternary structure, the RNAP catalytic core consists of 2 alpha, 1 beta, 1 beta' and 1 omega subunit. When a sigma factor is associated with the core the holoenzyme is formed, which can initiate transcription.

The catalysed reaction is RNA(n) + a ribonucleoside 5'-triphosphate = RNA(n+1) + diphosphate. Functionally, DNA-dependent RNA polymerase catalyzes the transcription of DNA into RNA using the four ribonucleoside triphosphates as substrates. This chain is DNA-directed RNA polymerase subunit beta, found in Cupriavidus metallidurans (strain ATCC 43123 / DSM 2839 / NBRC 102507 / CH34) (Ralstonia metallidurans).